The chain runs to 284 residues: Tropomyosin Tod p 1.0102 (284 aa).

Positions Lys15–Glu273 form a coiled coil. Residues Glu103–Gly136 form a disordered region.

This sequence belongs to the tropomyosin family. As to quaternary structure, homodimer. In terms of processing, the N-terminus is blocked. In terms of tissue distribution, expressed in mantle muscle (at protein level).

Functionally, tropomyosin, in association with the troponin complex, plays a central role in the calcium dependent regulation of muscle contraction. The protein is Tropomyosin Tod p 1.0102 of Todarodes pacificus (Japanese flying squid).